Here is a 280-residue protein sequence, read N- to C-terminus: Acyl-[acyl-carrier-protein]--UDP-N-acetylglucosamine O-acyltransferase (280 aa).

It belongs to the transferase hexapeptide repeat family. LpxA subfamily. Homotrimer.

It is found in the cytoplasm. The catalysed reaction is a (3R)-hydroxyacyl-[ACP] + UDP-N-acetyl-alpha-D-glucosamine = a UDP-3-O-[(3R)-3-hydroxyacyl]-N-acetyl-alpha-D-glucosamine + holo-[ACP]. It functions in the pathway glycolipid biosynthesis; lipid IV(A) biosynthesis; lipid IV(A) from (3R)-3-hydroxytetradecanoyl-[acyl-carrier-protein] and UDP-N-acetyl-alpha-D-glucosamine: step 1/6. Its function is as follows. Involved in the biosynthesis of lipid A, a phosphorylated glycolipid that anchors the lipopolysaccharide to the outer membrane of the cell. The sequence is that of Acyl-[acyl-carrier-protein]--UDP-N-acetylglucosamine O-acyltransferase from Chlamydia muridarum (strain MoPn / Nigg).